A 97-amino-acid chain; its full sequence is Late embryogenesis abundant protein Lea5 (97 aa).

Belongs to the LEA type 3 family.

The protein is Late embryogenesis abundant protein Lea5 (LEA5) of Citrus sinensis (Sweet orange).